We begin with the raw amino-acid sequence, 356 residues long: UDP-N-acetylglucosamine--N-acetylmuramyl-(pentapeptide) pyrophosphoryl-undecaprenol N-acetylglucosamine transferase (356 aa).

Ser-195 and Gln-287 together coordinate UDP-N-acetyl-alpha-D-glucosamine.

Belongs to the glycosyltransferase 28 family. MurG subfamily.

The protein resides in the cell membrane. The catalysed reaction is Mur2Ac(oyl-L-Ala-gamma-D-Glu-L-Lys-D-Ala-D-Ala)-di-trans,octa-cis-undecaprenyl diphosphate + UDP-N-acetyl-alpha-D-glucosamine = beta-D-GlcNAc-(1-&gt;4)-Mur2Ac(oyl-L-Ala-gamma-D-Glu-L-Lys-D-Ala-D-Ala)-di-trans,octa-cis-undecaprenyl diphosphate + UDP + H(+). The protein operates within cell wall biogenesis; peptidoglycan biosynthesis. In terms of biological role, cell wall formation. Catalyzes the transfer of a GlcNAc subunit on undecaprenyl-pyrophosphoryl-MurNAc-pentapeptide (lipid intermediate I) to form undecaprenyl-pyrophosphoryl-MurNAc-(pentapeptide)GlcNAc (lipid intermediate II). The sequence is that of UDP-N-acetylglucosamine--N-acetylmuramyl-(pentapeptide) pyrophosphoryl-undecaprenol N-acetylglucosamine transferase from Streptococcus sanguinis (strain SK36).